The sequence spans 245 residues: 8-amino-3,8-dideoxy-manno-octulosonate cytidylyltransferase (245 aa).

This sequence belongs to the KdsB family.

It localises to the cytoplasm. The catalysed reaction is 8-amino-3,8-dideoxy-alpha-D-manno-octulosonate + CTP = CMP-8-amino-3,8-dideoxy-alpha-D-manno-oct-2-ulosonate + diphosphate. The protein operates within bacterial outer membrane biogenesis; lipopolysaccharide biosynthesis. Its function is as follows. Activates KDO8N (a required 8-carbon sugar) for incorporation into bacterial lipopolysaccharide in the Shewanella genus. The sequence is that of 8-amino-3,8-dideoxy-manno-octulosonate cytidylyltransferase from Shewanella oneidensis (strain ATCC 700550 / JCM 31522 / CIP 106686 / LMG 19005 / NCIMB 14063 / MR-1).